We begin with the raw amino-acid sequence, 630 residues long: Probable potassium transport system protein Kup (630 aa).

Helical transmembrane passes span 17–37 (LAIAAIGVVFGDIGTSPLYSL), 51–71 (PSAILGVISLLFWAIILVVGI), 105–125 (ITGLMMALGIFGACMFYGDAV), 144–164 (PQLSHLVLPITIVILIALFWI), 175–195 (LFGPIMVIWFVTIAALGVYHI), 218–238 (VLLAYVVLGSVVLVLTGAEAL), 255–275 (YVLVMPSLVLNYFGQGALLLL), 283–303 (PFFLLAPQWAALPLVVLSTVA), 344–364 (IYVPVVNWLLLFVILCIVIGF), 374–394 (YGIAVTATMVITTILAAVVMV), 402–422 (LLVAMIIGVFLVIDLGFFGAN), and 428–448 (QGGWLPLGIGALLFFLLMTWY).

Belongs to the HAK/KUP transporter (TC 2.A.72) family.

The protein localises to the cell inner membrane. The enzyme catalyses K(+)(in) + H(+)(in) = K(+)(out) + H(+)(out). Transport of potassium into the cell. Likely operates as a K(+):H(+) symporter. The sequence is that of Probable potassium transport system protein Kup from Burkholderia thailandensis (strain ATCC 700388 / DSM 13276 / CCUG 48851 / CIP 106301 / E264).